The following is a 652-amino-acid chain: tRNA 5-methylaminomethyl-2-thiouridine biosynthesis bifunctional protein MnmC (652 aa).

The tract at residues 1–235 (MPDRLVPATL…EPALRVGEYA (235 aa)) is tRNA (mnm(5)s(2)U34)-methyltransferase. An FAD-dependent cmnm(5)s(2)U34 oxidoreductase region spans residues 259–652 (IGAGLAGCAV…IRALRGRQIG (394 aa)).

The protein in the N-terminal section; belongs to the methyltransferase superfamily. tRNA (mnm(5)s(2)U34)-methyltransferase family. In the C-terminal section; belongs to the DAO family. FAD serves as cofactor.

Its subcellular location is the cytoplasm. The enzyme catalyses 5-aminomethyl-2-thiouridine(34) in tRNA + S-adenosyl-L-methionine = 5-methylaminomethyl-2-thiouridine(34) in tRNA + S-adenosyl-L-homocysteine + H(+). In terms of biological role, catalyzes the last two steps in the biosynthesis of 5-methylaminomethyl-2-thiouridine (mnm(5)s(2)U) at the wobble position (U34) in tRNA. Catalyzes the FAD-dependent demodification of cmnm(5)s(2)U34 to nm(5)s(2)U34, followed by the transfer of a methyl group from S-adenosyl-L-methionine to nm(5)s(2)U34, to form mnm(5)s(2)U34. The polypeptide is tRNA 5-methylaminomethyl-2-thiouridine biosynthesis bifunctional protein MnmC (Burkholderia ambifaria (strain MC40-6)).